A 939-amino-acid polypeptide reads, in one-letter code: cGMP-dependent 3',5'-cyclic phosphodiesterase (939 aa).

Residue glycine 2 is the site of N-myristoyl glycine attachment. S-palmitoyl cysteine attachment occurs at residues cysteine 5 and cysteine 11. The interval 16–38 is disordered; sequence YPAARPAEPRGQQVFLKPDEPPP. The residue at position 116 (serine 116) is a Phosphoserine. Residues 197 to 217 form a disordered region; that stretch reads PEAVQNTSVDASEDQKDEKGY. GAF domains follow at residues 236–373 and 408–547; these read ATSL…HYTG and DVSV…GISI. The 3',5'-cyclic GMP site is built by serine 430, aspartate 445, isoleucine 464, tyrosine 487, and threonine 498. One can recognise a PDEase domain in the interval 577–901; the sequence is SDDEYTKLLH…EHWTKVSHKF (325 aa). Histidine 655 serves as the catalytic Proton donor. Positions 659, 695, 696, and 807 each coordinate Zn(2+). Aspartate 696 is a binding site for Mg(2+).

The protein belongs to the cyclic nucleotide phosphodiesterase family. PDE2 subfamily. Homodimer. Zn(2+) serves as cofactor. It depends on Mg(2+) as a cofactor. As to expression, expressed in brain and liver (at protein level).

The protein localises to the cytoplasm. Its subcellular location is the mitochondrion matrix. It is found in the mitochondrion inner membrane. It localises to the mitochondrion outer membrane. The protein resides in the cell membrane. It carries out the reaction a nucleoside 3',5'-cyclic phosphate + H2O = a nucleoside 5'-phosphate + H(+). The catalysed reaction is 3',5'-cyclic GMP + H2O = GMP + H(+). It catalyses the reaction 3',5'-cyclic AMP + H2O = AMP + H(+). Its activity is regulated as follows. The 3',5'-cyclic-AMP phosphodiesterase activity is stimulated by 3',5'-cyclic GMP. Specifically inhibited by Bay 60-7550. In terms of biological role, cGMP-activated cyclic nucleotide phosphodiesterase with a dual-specificity for the second messengers cAMP and cGMP, which are key regulators of many important physiological processes. Has a higher efficiency with cGMP compared to cAMP. Plays a role in cell growth and migration. Functionally, regulates mitochondrial cAMP levels and respiration. Involved in the regulation of mitochondria morphology/dynamics and apoptotic cell death via local modulation of cAMP/PKA signaling in the mitochondrion, including the monitoring of local cAMP levels at the outer mitochondrial membrane and of PKA-dependent phosphorylation of DNM1L. This chain is cGMP-dependent 3',5'-cyclic phosphodiesterase, found in Mus musculus (Mouse).